The following is a 489-amino-acid chain: ATF/CREB activator 1 (489 aa).

In terms of domain architecture, bZIP spans 384 to 447 (AWKRARLLER…QKMKKISRLH (64 aa)). The tract at residues 386 to 406 (KRARLLERNRIAASKCRQRKK) is basic motif. Positions 412–419 (LQREFDQI) are leucine-zipper.

This sequence belongs to the bZIP family.

Its subcellular location is the nucleus. Its function is as follows. Transcriptional activator of promoters containing ATF/CREB sites. Can independently stimulate transcription through ATF/CREB sites. Important for a variety of biological functions including growth on non-optimal carbon sources. Regulates the expression of COS8. Has efficient silencing blocking activities. This is ATF/CREB activator 1 (ACA1) from Saccharomyces cerevisiae (strain ATCC 204508 / S288c) (Baker's yeast).